A 78-amino-acid polypeptide reads, in one-letter code: Small ribosomal subunit protein uS15c (78 aa).

Belongs to the universal ribosomal protein uS15 family. Part of the 30S ribosomal subunit.

It localises to the plastid. The protein localises to the chloroplast. In Saccharum officinarum (Sugarcane), this protein is Small ribosomal subunit protein uS15c (rps15-A).